Here is a 121-residue protein sequence, read N- to C-terminus: Large ribosomal subunit protein uL18 (121 aa).

Belongs to the universal ribosomal protein uL18 family. In terms of assembly, part of the 50S ribosomal subunit; part of the 5S rRNA/L5/L18/L25 subcomplex. Contacts the 5S and 23S rRNAs.

Functionally, this is one of the proteins that bind and probably mediate the attachment of the 5S RNA into the large ribosomal subunit, where it forms part of the central protuberance. This is Large ribosomal subunit protein uL18 from Verminephrobacter eiseniae (strain EF01-2).